A 452-amino-acid polypeptide reads, in one-letter code: Enolase (452 aa).

Gln167 is a (2R)-2-phosphoglycerate binding site. The Proton donor role is filled by Glu209. The Mg(2+) site is built by Asp250, Glu307, and Asp334. Residues Lys359, Arg388, Ser389, and Lys410 each contribute to the (2R)-2-phosphoglycerate site. Lys359 serves as the catalytic Proton acceptor.

It belongs to the enolase family. Mg(2+) is required as a cofactor.

It localises to the cytoplasm. The protein localises to the secreted. Its subcellular location is the cell surface. It carries out the reaction (2R)-2-phosphoglycerate = phosphoenolpyruvate + H2O. Its pathway is carbohydrate degradation; glycolysis; pyruvate from D-glyceraldehyde 3-phosphate: step 4/5. Catalyzes the reversible conversion of 2-phosphoglycerate (2-PG) into phosphoenolpyruvate (PEP). It is essential for the degradation of carbohydrates via glycolysis. The chain is Enolase from Mesomycoplasma hyopneumoniae (strain 7448) (Mycoplasma hyopneumoniae).